The following is a 164-amino-acid chain: Putative Cys-tRNA(Pro)/Cys-tRNA(Cys) deacylase EbsC (164 aa).

This sequence belongs to the prolyl-tRNA editing family. YbaK/EbsC subfamily.

Affects the expression of the receptor, named binding substance, that mediates mating aggregate formation. Could be a regulatory protein that suppresses the function or expression of ebsA and/or ebsMB. This chain is Putative Cys-tRNA(Pro)/Cys-tRNA(Cys) deacylase EbsC, found in Enterococcus faecalis (strain ATCC 700802 / V583).